Consider the following 852-residue polypeptide: Leucine--tRNA ligase (852 aa).

The 'HIGH' region motif lies at Pro42–His52. A disordered region spans residues Asn586–Glu606. A 'KMSKS' region motif is present at residues Lys614–Ser618. Position 617 (Lys617) interacts with ATP.

Belongs to the class-I aminoacyl-tRNA synthetase family.

The protein resides in the cytoplasm. The enzyme catalyses tRNA(Leu) + L-leucine + ATP = L-leucyl-tRNA(Leu) + AMP + diphosphate. The protein is Leucine--tRNA ligase of Picosynechococcus sp. (strain ATCC 27264 / PCC 7002 / PR-6) (Agmenellum quadruplicatum).